Reading from the N-terminus, the 141-residue chain is Hemoglobin subunit alpha (141 aa).

The Globin domain maps to 1 to 141 (VLSPADKTNV…VSTVLTSKYR (141 aa)). S3 is subject to Phosphoserine. K7 is subject to N6-succinyllysine. A Phosphothreonine modification is found at T8. N6-succinyllysine is present on K11. N6-acetyllysine; alternate is present on K16. K16 carries the post-translational modification N6-succinyllysine; alternate. At Y24 the chain carries Phosphotyrosine. Residue S35 is modified to Phosphoserine. K40 is subject to N6-succinyllysine. Residue H58 participates in O2 binding. Residue H87 coordinates heme b. The residue at position 102 (S102) is a Phosphoserine. A Phosphothreonine modification is found at T108. Residues S124 and S131 each carry the phosphoserine modification. T134 and T137 each carry phosphothreonine. Position 138 is a phosphoserine (S138).

This sequence belongs to the globin family. In terms of assembly, heterotetramer of two alpha chains and two beta chains. As to expression, red blood cells.

Its function is as follows. Involved in oxygen transport from the lung to the various peripheral tissues. In terms of biological role, hemopressin acts as an antagonist peptide of the cannabinoid receptor CNR1. Hemopressin-binding efficiently blocks cannabinoid receptor CNR1 and subsequent signaling. The chain is Hemoglobin subunit alpha (HBA) from Cynopterus sphinx (Indian short-nosed fruit bat).